The primary structure comprises 193 residues: Auxin-responsive protein IAA23 (193 aa).

The span at 1–12 (MSTSSGADSSPP) shows a compositional bias: polar residues. The segment at 1 to 66 (MSTSSGADSS…SPKARAVGWP (66 aa)) is disordered. The segment covering 21–36 (TALTLALPGSSSSSSS) has biased composition (low complexity). The EAR-like (transcriptional repression) signature appears at 23–27 (LTLAL). Residues 39–53 (DPERKRAAHADHADA) are compositionally biased toward basic and acidic residues. The PB1 domain maps to 83–191 (AKLVKVAVDG…EAVNLSPRRS (109 aa)).

The protein belongs to the Aux/IAA family. As to quaternary structure, homodimers and heterodimers. Highly expressed in roots. Expressed in seedlings.

The protein localises to the nucleus. In terms of biological role, aux/IAA proteins are short-lived transcriptional factors that function as repressors of early auxin response genes at low auxin concentrations. The sequence is that of Auxin-responsive protein IAA23 (IAA23) from Oryza sativa subsp. japonica (Rice).